A 147-amino-acid polypeptide reads, in one-letter code: Allograft inflammatory factor 1 (147 aa).

Residue Ser-2 is modified to N-acetylserine. Residue Lys-11 is modified to N6-acetyllysine. Ser-39 is modified (phosphoserine). One can recognise an EF-hand 1 domain in the interval 45–80 (SKLEAFKTKYMEFDLNGNGDIDIMSLKRMLEKLGVP). 7 residues coordinate Ca(2+): Asp-58, Asn-60, Asn-62, Asp-64, Glu-98, Thr-100, and Asp-105. Positions 81 to 115 (KTHLELKKLIREVSSGSEETFSYSDFLRMMLGKRS) constitute an EF-hand 2; degenerate domain. The tract at residues 127-147 (KNKEHQKPTGPPAKKAISELP) is disordered.

In terms of assembly, homodimer (Potential). Monomer. Interacts with LCP1. Cardiac allograft, spleen and testis. Expressed by inflammatory cells (macrophages and neutrophils).

It localises to the cytoplasm. The protein localises to the cytoskeleton. It is found in the cell projection. Its subcellular location is the ruffle membrane. The protein resides in the phagocytic cup. In terms of biological role, actin-binding protein that enhances membrane ruffling and RAC activation. Enhances the actin-bundling activity of LCP1. Binds calcium. Plays a role in RAC signaling and in phagocytosis. May play an role in macrophage activation and function. Promotes the proliferation of vascular smooth muscle cells and of T-lymphocytes. Enhances lymphocyte migration. Plays a role in vascular inflammation. This is Allograft inflammatory factor 1 (Aif1) from Rattus norvegicus (Rat).